The primary structure comprises 833 residues: Vacuolar protein sorting-associated protein 16 homolog (833 aa).

This sequence belongs to the VPS16 family. Component of the homotypic fusion and vacuole protein sorting (HOPS) complex, composed of Vps16A, car/Vps33A, dor/Vps18, Vps39, Vps11 and lt/Vps41. Interacts with Syx17 (via SNARE domain); the interaction may involve multiple components of the HOPS complex and may promote assembly of the Syx17-Snap29-Vamp7 trans-SNARE complex. Component of the class C core vacuole/endosome tethering (CORVET) complex composed of at least Vps8, dor/Vps18, car/Vps33A and Vps16A; unlike in other species, Vps11 is not part of the Drosophila complex. Due to the reduced number of components the Drosophila CORVET complex is often referred to as the miniCORVET complex. The tethering complex core made up of Vps16A, car/Vps33A and dor/Vps18 and shared by both HOPS and CORVET, preferentially associates with CORVET-specific Vps8 over HOPS-specific lt/Vps41. Interacts with Rab2 (GTP-bound form).

It localises to the late endosome membrane. Its subcellular location is the lysosome membrane. The protein resides in the cytoplasmic vesicle. It is found in the autophagosome. Its function is as follows. Core component of the class C core vacuole/endosome tethering (CORVET) and the homotypic fusion and vacuole protein sorting (HOPS) tethering complexes involved in endo-lysosomal vesicle trafficking and lysosome biogenesis. The CORVET complex facilitates docking and fusion of endosomal vesicles during endosome maturation, acts upstream of HOPS, but is not involved in autophagic flux. The CORVET complex may cooperate with the early endosomal tether Rbsn-5 to mediate endosomal fusion. The HOPS complex facilitates docking and fusion of lysosomes with late endosomes and several other types of vesicles. The HOPS complex is also involved in autophagy and crinophagy (the elimination of unused secretory granules through their fusion with lysosomes). The HOPS complex mediates autophagocitic flux, probably by binding autophagosome-associated Syx17/syntaxin 17, promoting assembly of the trans-SNARE complex and instigating autophagosome-lysosome fusion. Independent of Syx17/syntaxin 17, HOPS is involved in biosynthetic transport to lysosomes and lysosome-related organelles such as eye-pigment granules. Required for endocytic degradation of boss/bride of sevenless and N/Notch in developing ommatidia. The sequence is that of Vacuolar protein sorting-associated protein 16 homolog from Drosophila melanogaster (Fruit fly).